Here is a 591-residue protein sequence, read N- to C-terminus: Cineole synthase 1, chloroplastic (591 aa).

The transit peptide at 1-44 (MSSLIMQVVIPKPAKFFHNNLFSLSSKRHRFSTTTTTRGGRWAR) directs the protein to the chloroplast. Residues Arg308, Asp345, Asp349, Arg486, and Asp489 each contribute to the (2E)-geranyl diphosphate site. 2 residues coordinate Mg(2+): Asp345 and Asp349. The DDXXD motif motif lies at 345–349 (DDVFD). Positions 489, 493, and 497 each coordinate Mg(2+).

Belongs to the terpene synthase family. Tpsb subfamily. As to quaternary structure, monomer. Requires Mg(2+) as cofactor. The cofactor is Mn(2+).

It localises to the plastid. The protein resides in the chloroplast. It carries out the reaction (2E)-geranyl diphosphate + H2O = 1,8-cineole + diphosphate. It catalyses the reaction (2E)-geranyl diphosphate = alpha-pinene + diphosphate. The enzyme catalyses (2E)-geranyl diphosphate = beta-pinene + diphosphate. The catalysed reaction is (2E)-geranyl diphosphate + H2O = (S)-alpha-terpineol + diphosphate. It carries out the reaction (2E)-geranyl diphosphate = beta-myrcene + diphosphate. It catalyses the reaction (2E)-geranyl diphosphate = sabinene + diphosphate. It participates in secondary metabolite biosynthesis; terpenoid biosynthesis. In terms of biological role, monoterpene synthase (TPS) involved in the biosynthesis of monoterpene natural products, components of the chemical defense arsenal. Catalyzes the conversion of (2E)-geranyl diphosphate (GPP) into 1,8-cineole, and, as minor products, alpha-terpineol, beta-pinene, alpha-pinene, sabinene and myrcene. The sequence is that of Cineole synthase 1, chloroplastic from Salvia fruticosa (Greek sage).